The primary structure comprises 146 residues: Ribonuclease H (146 aa).

The region spanning 1-136 is the RNase H type-1 domain; the sequence is MKHIEIYTDG…CDTLAREAAL (136 aa). D9, E47, D69, and D128 together coordinate Mg(2+).

It belongs to the RNase H family. As to quaternary structure, monomer. The cofactor is Mg(2+).

The protein resides in the cytoplasm. It catalyses the reaction Endonucleolytic cleavage to 5'-phosphomonoester.. In terms of biological role, endonuclease that specifically degrades the RNA of RNA-DNA hybrids. This Campylobacter jejuni subsp. jejuni serotype O:23/36 (strain 81-176) protein is Ribonuclease H.